We begin with the raw amino-acid sequence, 314 residues long: Methionyl-tRNA formyltransferase (314 aa).

Residue serine 110–proline 113 participates in (6S)-5,6,7,8-tetrahydrofolate binding.

Belongs to the Fmt family.

It carries out the reaction L-methionyl-tRNA(fMet) + (6R)-10-formyltetrahydrofolate = N-formyl-L-methionyl-tRNA(fMet) + (6S)-5,6,7,8-tetrahydrofolate + H(+). Attaches a formyl group to the free amino group of methionyl-tRNA(fMet). The formyl group appears to play a dual role in the initiator identity of N-formylmethionyl-tRNA by promoting its recognition by IF2 and preventing the misappropriation of this tRNA by the elongation apparatus. This chain is Methionyl-tRNA formyltransferase, found in Bacillus cereus (strain G9842).